Here is a 275-residue protein sequence, read N- to C-terminus: Polyamine aminopropyltransferase (275 aa).

Residues H2 to K235 form the PABS domain. Q31 lines the S-methyl-5'-thioadenosine pocket. Spermidine-binding residues include H62 and D86. Residues E106 and D137–G138 contribute to the S-methyl-5'-thioadenosine site. D155 functions as the Proton acceptor in the catalytic mechanism. Position 155-158 (D155–D158) interacts with spermidine. P162 contacts S-methyl-5'-thioadenosine.

Belongs to the spermidine/spermine synthase family. Homodimer or homotetramer.

The protein localises to the cytoplasm. It catalyses the reaction S-adenosyl 3-(methylsulfanyl)propylamine + putrescine = S-methyl-5'-thioadenosine + spermidine + H(+). It participates in amine and polyamine biosynthesis; spermidine biosynthesis; spermidine from putrescine: step 1/1. In terms of biological role, catalyzes the irreversible transfer of a propylamine group from the amino donor S-adenosylmethioninamine (decarboxy-AdoMet) to putrescine (1,4-diaminobutane) to yield spermidine. This Desulforudis audaxviator (strain MP104C) protein is Polyamine aminopropyltransferase.